A 177-amino-acid polypeptide reads, in one-letter code: Bifunctional protein PyrR (177 aa).

Substrate contacts are provided by residues Ser42–Arg43, Asp104–Thr112, and Arg137. The PRPP-binding signature appears at Val100–Thr112.

This sequence belongs to the purine/pyrimidine phosphoribosyltransferase family. PyrR subfamily.

The catalysed reaction is UMP + diphosphate = 5-phospho-alpha-D-ribose 1-diphosphate + uracil. Functionally, regulates the transcription of the pyrimidine nucleotide (pyr) operon in response to exogenous pyrimidines. In terms of biological role, also displays a weak uracil phosphoribosyltransferase activity which is not physiologically significant. The chain is Bifunctional protein PyrR from Fusobacterium nucleatum subsp. nucleatum (strain ATCC 25586 / DSM 15643 / BCRC 10681 / CIP 101130 / JCM 8532 / KCTC 2640 / LMG 13131 / VPI 4355).